Consider the following 456-residue polypeptide: Bacteriochlorophyllide d C-12(1)-methyltransferase (456 aa).

The Radical SAM core domain maps to 178-405 (HAKKYSQLIP…MFEPKKLGGE (228 aa)). [4Fe-4S] cluster contacts are provided by cysteine 194, cysteine 198, and cysteine 201.

This sequence belongs to the radical SAM superfamily. The cofactor is [4Fe-4S] cluster.

Its subcellular location is the cytoplasm. It catalyses the reaction 8-ethyl-12-methyl-3-vinylbacteriochlorophyllide d + S-adenosyl-L-methionine = 8,12-diethyl-3-vinylbacteriochlorophyllide d + S-adenosyl-L-homocysteine + H(+). Its pathway is porphyrin-containing compound metabolism; bacteriochlorophyll biosynthesis (light-independent). Involved in the biosynthesis of the major light-harvesting pigment bacteriochlorophyll c (BChlc), which confers a significant competitive advantage to green sulfur bacteria living at limiting red and near-infrared light intensities. BchR is a methyltransferase that adds a single methyl group to the methyl carbon at the C-12(1) position of 8-ethyl-12-methyl-3-vinylbacteriochlorophyllide d to yield 8,12-diethyl-3-vinylbacteriochlorophyllide d. This chain is Bacteriochlorophyllide d C-12(1)-methyltransferase, found in Chlorobaculum tepidum (strain ATCC 49652 / DSM 12025 / NBRC 103806 / TLS) (Chlorobium tepidum).